Consider the following 317-residue polypeptide: tRNA uridine(34) hydroxylase (317 aa).

Positions 129–223 constitute a Rhodanese domain; it reads TDPEVLLIDT…YLEEVPEQES (95 aa). The Cysteine persulfide intermediate role is filled by cysteine 183. The interval 298 to 317 is disordered; it reads AKARNQPHPIGRNYRLPSEA.

It belongs to the TrhO family.

The enzyme catalyses uridine(34) in tRNA + AH2 + O2 = 5-hydroxyuridine(34) in tRNA + A + H2O. In terms of biological role, catalyzes oxygen-dependent 5-hydroxyuridine (ho5U) modification at position 34 in tRNAs. The sequence is that of tRNA uridine(34) hydroxylase from Pseudomonas syringae pv. tomato (strain ATCC BAA-871 / DC3000).